We begin with the raw amino-acid sequence, 352 residues long: N-acetyl-gamma-glutamyl-phosphate reductase (352 aa).

Cys155 is a catalytic residue.

Belongs to the NAGSA dehydrogenase family. Type 1 subfamily.

Its subcellular location is the cytoplasm. It catalyses the reaction N-acetyl-L-glutamate 5-semialdehyde + phosphate + NADP(+) = N-acetyl-L-glutamyl 5-phosphate + NADPH + H(+). It participates in amino-acid biosynthesis; L-arginine biosynthesis; N(2)-acetyl-L-ornithine from L-glutamate: step 3/4. Its function is as follows. Catalyzes the NADPH-dependent reduction of N-acetyl-5-glutamyl phosphate to yield N-acetyl-L-glutamate 5-semialdehyde. The protein is N-acetyl-gamma-glutamyl-phosphate reductase of Gloeothece citriformis (strain PCC 7424) (Cyanothece sp. (strain PCC 7424)).